The chain runs to 84 residues: Large ribosomal subunit protein bL27 (84 aa).

The disordered stretch occupies residues 1–22 (MAHKKAGGSTRNGRDSESKRLG).

The protein belongs to the bacterial ribosomal protein bL27 family.

The chain is Large ribosomal subunit protein bL27 from Shewanella sp. (strain MR-4).